The chain runs to 431 residues: Glutamate-1-semialdehyde 2,1-aminomutase (431 aa).

N6-(pyridoxal phosphate)lysine is present on K269.

It belongs to the class-III pyridoxal-phosphate-dependent aminotransferase family. HemL subfamily. In terms of assembly, homodimer. Pyridoxal 5'-phosphate is required as a cofactor.

The protein resides in the cytoplasm. The catalysed reaction is (S)-4-amino-5-oxopentanoate = 5-aminolevulinate. It functions in the pathway porphyrin-containing compound metabolism; protoporphyrin-IX biosynthesis; 5-aminolevulinate from L-glutamyl-tRNA(Glu): step 2/2. The protein operates within porphyrin-containing compound metabolism; chlorophyll biosynthesis. This chain is Glutamate-1-semialdehyde 2,1-aminomutase, found in Chlorobium limicola (strain DSM 245 / NBRC 103803 / 6330).